The chain runs to 70 residues: Large ribosomal subunit protein bL31 (70 aa).

Residues Cys-16, Cys-18, Cys-37, and Cys-40 each contribute to the Zn(2+) site.

The protein belongs to the bacterial ribosomal protein bL31 family. Type A subfamily. In terms of assembly, part of the 50S ribosomal subunit. It depends on Zn(2+) as a cofactor.

Binds the 23S rRNA. The chain is Large ribosomal subunit protein bL31 from Klebsiella pneumoniae (strain 342).